We begin with the raw amino-acid sequence, 344 residues long: MLQALLDSKDFLALTLANPETLGDEFSFALGEHTRVEVWDTGVIVFEPAQAQGKDVILSCGVHGNETAPIELCNTLIKQLLQQKIIAKQRTLFLIGNPLAINNGTRIIDENMNRLFSGEHSNPPGLVNPERVRAKKLEAYVDRFFKGAAAGRQRIHYDLHTAMRASKHEKFAIYPYRPGRAYSAEQIMFLAASGVDTVLFHHEPTTTFSYFSSEQYGADAFTIELGKVYPMGQNDMTRFIAAQEMFMRLITDKPLALEPFSADKVNLYQVCRVINKHFDDFEFTFATDVENFRSFPKGFVLAREGGQEIKVEQEFEAIVFPNAKVPIGNRTVICLIPSVAPDVR.

Residues H63, E66, and H160 each coordinate Zn(2+). E224 is a catalytic residue.

The protein belongs to the AspA/AstE family. Succinylglutamate desuccinylase subfamily. The cofactor is Zn(2+).

The enzyme catalyses N-succinyl-L-glutamate + H2O = L-glutamate + succinate. It functions in the pathway amino-acid degradation; L-arginine degradation via AST pathway; L-glutamate and succinate from L-arginine: step 5/5. In terms of biological role, transforms N(2)-succinylglutamate into succinate and glutamate. In Shewanella sp. (strain MR-7), this protein is Succinylglutamate desuccinylase.